A 274-amino-acid chain; its full sequence is Lectin-like protein (274 aa).

The signal sequence occupies residues 1-19 (MKIHKLCFLALLLAHTTSA). Positions 28–268 (TSELVFLGDA…RHDIWSWTFQ (241 aa)) are legume-lectin like. The interval 62–81 (SHGQSLWSTPVPFKPSSNSS) is disordered. N-linked (GlcNAc...) asparagine glycosylation occurs at asparagine 129. Serine 238 carries the phosphoserine modification.

Belongs to the leguminous lectin family. Expressed in seedlings and leaves of adult plants.

Its subcellular location is the secreted. The protein resides in the extracellular space. The protein localises to the apoplast. It is found in the cell membrane. Plays a positive role in the effector-triggered immunity (ETI) response. Involved in salicylic acid (SA)-mediated processes occurring in ETI response, but is not involved in the autophagy process. Promotes systemic rather than local immunity. Essential for systemic acquired resistance (SAR), but not necessary for immune signaling downstream of SA. May act in parallel with SA. In Arabidopsis thaliana (Mouse-ear cress), this protein is Lectin-like protein.